A 71-amino-acid chain; its full sequence is Virion membrane protein A13 homolog (71 aa).

Residues M1 to I21 traverse the membrane as a helical segment. Residues Y22–S70 lie on the Virion surface side of the membrane.

It belongs to the chordopoxvirinae A13 family.

The protein resides in the virion membrane. Functionally, essential for the encapsidation of DNA into immature virions (IV) and the subsequent maturation of IV into mature virions (MV). The sequence is that of Virion membrane protein A13 homolog from Vertebrata (FPV).